We begin with the raw amino-acid sequence, 1343 residues long: DNA-directed RNA polymerase subunit beta (1343 aa).

The protein belongs to the RNA polymerase beta chain family. The RNAP catalytic core consists of 2 alpha, 1 beta, 1 beta' and 1 omega subunit. When a sigma factor is associated with the core the holoenzyme is formed, which can initiate transcription.

It catalyses the reaction RNA(n) + a ribonucleoside 5'-triphosphate = RNA(n+1) + diphosphate. In terms of biological role, DNA-dependent RNA polymerase catalyzes the transcription of DNA into RNA using the four ribonucleoside triphosphates as substrates. In Shewanella baltica (strain OS223), this protein is DNA-directed RNA polymerase subunit beta.